The sequence spans 129 residues: Ribosome-binding factor A (129 aa).

It belongs to the RbfA family. As to quaternary structure, monomer. Binds 30S ribosomal subunits, but not 50S ribosomal subunits or 70S ribosomes.

The protein localises to the cytoplasm. Its function is as follows. One of several proteins that assist in the late maturation steps of the functional core of the 30S ribosomal subunit. Associates with free 30S ribosomal subunits (but not with 30S subunits that are part of 70S ribosomes or polysomes). Required for efficient processing of 16S rRNA. May interact with the 5'-terminal helix region of 16S rRNA. This chain is Ribosome-binding factor A, found in Actinobacillus succinogenes (strain ATCC 55618 / DSM 22257 / CCUG 43843 / 130Z).